A 397-amino-acid polypeptide reads, in one-letter code: DnaJ homolog subfamily A member 1 (397 aa).

One can recognise a J domain in the interval 6-68 (TYYDVLGVKP…KKRELYDKGG (63 aa)). The residue at position 66 (Lys66) is an N6-acetyllysine. Residue Ser83 is modified to Phosphoserine. The segment at 121–205 (GATRKLALQK…CNGRKIVREK (85 aa)) adopts a CR-type zinc-finger fold. 8 residues coordinate Zn(2+): Cys134, Cys137, Cys150, Cys153, Cys177, Cys180, Cys193, and Cys196. 4 CXXCXGXG motif repeats span residues 134–141 (CDKCEGRG), 150–157 (CPNCRGTG), 177–184 (CMECQGHG), and 193–200 (CKSCNGRK). Ser335 carries the phosphoserine modification. Residues 352 to 397 (VEETDEMDQVELVDFDPNQERRRHYNGEAYEDDEHHPRGGVQCQTS) form a disordered region. Acidic residues predominate over residues 353-365 (EETDEMDQVELVD). Residue Tyr381 is modified to Phosphotyrosine. A Cysteine methyl ester modification is found at Cys394. A lipid anchor (S-farnesyl cysteine) is attached at Cys394. Positions 395–397 (QTS) are cleaved as a propeptide — removed in mature form.

In terms of assembly, identified in a complex with HSPA1B and BAX. Interacts with RNF207.

The protein resides in the membrane. It is found in the cytoplasm. The protein localises to the microsome. Its subcellular location is the mitochondrion. It localises to the nucleus. The protein resides in the perinuclear region. Functionally, co-chaperone for HSPA8/Hsc70. Plays a role in protein transport into mitochondria via its role as co-chaperone. Functions as co-chaperone for HSPA1B and negatively regulates the translocation of BAX from the cytosol to mitochondria in response to cellular stress, thereby protecting cells against apoptosis. Stimulates ATP hydrolysis, but not the folding of unfolded proteins mediated by HSPA1A (in vitro). Promotes apoptosis in response to cellular stress mediated by exposure to anisomycin or UV. This is DnaJ homolog subfamily A member 1 (DNAJA1) from Bos taurus (Bovine).